We begin with the raw amino-acid sequence, 323 residues long: Cyclin-H (323 aa).

A Phosphoserine; by CDK8 modification is found at serine 5. The residue at position 132 (serine 132) is a Phosphoserine. Residues 295 to 323 (KGYEDDDYVSKKPKQEEEEWTDDDLVDSL) form a disordered region. Serine 304 bears the Phosphoserine; by CDK8 mark. Acidic residues predominate over residues 310 to 323 (EEEEWTDDDLVDSL). A Phosphothreonine modification is found at threonine 315. A Phosphoserine modification is found at serine 322.

The protein belongs to the cyclin family. Cyclin C subfamily. As to quaternary structure, associates primarily with CDK7 and MAT1 to form the CAK complex. CAK can further associate with the core-TFIIH to form the TFIIH basal transcription factor. Expressed in both the germinal and somatic cells of the testis.

The protein localises to the nucleus. In terms of biological role, regulates CDK7, the catalytic subunit of the CDK-activating kinase (CAK) enzymatic complex. CAK activates the cyclin-associated kinases CDK1, CDK2, CDK4 and CDK6 by threonine phosphorylation. CAK complexed to the core-TFIIH basal transcription factor activates RNA polymerase II by serine phosphorylation of the repetitive C-terminal domain (CTD) of its large subunit (POLR2A), allowing its escape from the promoter and elongation of the transcripts. Involved in cell cycle control and in RNA transcription by RNA polymerase II. Its expression and activity are constant throughout the cell cycle. This is Cyclin-H (Ccnh) from Mus musculus (Mouse).